Here is a 354-residue protein sequence, read N- to C-terminus: Carbamoyl phosphate synthase small chain (354 aa).

The tract at residues 1 to 167 (MEAVLILEDG…KEPKIHKTAN (167 aa)) is CPSase. L-glutamine-binding residues include Ser45, Gly219, and Gly221. The region spanning 171-354 (RCVLIDCGVK…DEMIKLKDRK (184 aa)) is the Glutamine amidotransferase type-1 domain. Cys246 acts as the Nucleophile in catalysis. 5 residues coordinate L-glutamine: Leu247, Gln250, Asn288, Gly290, and Phe291. Catalysis depends on residues His330 and Glu332.

Belongs to the CarA family. As to quaternary structure, composed of two chains; the small (or glutamine) chain promotes the hydrolysis of glutamine to ammonia, which is used by the large (or ammonia) chain to synthesize carbamoyl phosphate. Tetramer of heterodimers (alpha,beta)4.

The catalysed reaction is hydrogencarbonate + L-glutamine + 2 ATP + H2O = carbamoyl phosphate + L-glutamate + 2 ADP + phosphate + 2 H(+). It catalyses the reaction L-glutamine + H2O = L-glutamate + NH4(+). It participates in amino-acid biosynthesis; L-arginine biosynthesis; carbamoyl phosphate from bicarbonate: step 1/1. It functions in the pathway pyrimidine metabolism; UMP biosynthesis via de novo pathway; (S)-dihydroorotate from bicarbonate: step 1/3. In terms of biological role, small subunit of the glutamine-dependent carbamoyl phosphate synthetase (CPSase). CPSase catalyzes the formation of carbamoyl phosphate from the ammonia moiety of glutamine, carbonate, and phosphate donated by ATP, constituting the first step of 2 biosynthetic pathways, one leading to arginine and/or urea and the other to pyrimidine nucleotides. The small subunit (glutamine amidotransferase) binds and cleaves glutamine to supply the large subunit with the substrate ammonia. The sequence is that of Carbamoyl phosphate synthase small chain from Methanocaldococcus jannaschii (strain ATCC 43067 / DSM 2661 / JAL-1 / JCM 10045 / NBRC 100440) (Methanococcus jannaschii).